A 156-amino-acid chain; its full sequence is Small ribosomal subunit protein uS7 (156 aa).

It belongs to the universal ribosomal protein uS7 family. In terms of assembly, part of the 30S ribosomal subunit. Contacts proteins S9 and S11.

Its function is as follows. One of the primary rRNA binding proteins, it binds directly to 16S rRNA where it nucleates assembly of the head domain of the 30S subunit. Is located at the subunit interface close to the decoding center, probably blocks exit of the E-site tRNA. The polypeptide is Small ribosomal subunit protein uS7 (Aeromonas salmonicida (strain A449)).